The following is a 249-amino-acid chain: Probable transcriptional regulatory protein ACIAD2052 (249 aa).

It belongs to the TACO1 family.

Its subcellular location is the cytoplasm. The polypeptide is Probable transcriptional regulatory protein ACIAD2052 (Acinetobacter baylyi (strain ATCC 33305 / BD413 / ADP1)).